Reading from the N-terminus, the 411-residue chain is L-cysteine:1D-myo-inositol 2-amino-2-deoxy-alpha-D-glucopyranoside ligase (411 aa).

Residue Cys43 participates in Zn(2+) binding. L-cysteinyl-5'-AMP is bound by residues 43–46 (CGIT), Thr58, and 81–83 (NVT). The short motif at 45 to 55 (ITPYDATHLGH) is the 'HIGH' region element. Residues 186–191 (QRGGDP) carry the 'ERGGDP' region motif. Trp226 lines the L-cysteinyl-5'-AMP pocket. Cys230 serves as a coordination point for Zn(2+). 248 to 250 (GSD) is an L-cysteinyl-5'-AMP binding site. A Zn(2+)-binding site is contributed by His255. Ile282 provides a ligand contact to L-cysteinyl-5'-AMP. The short motif at 288-292 (KMSKS) is the 'KMSKS' region element.

Belongs to the class-I aminoacyl-tRNA synthetase family. MshC subfamily. Monomer. Requires Zn(2+) as cofactor.

It catalyses the reaction 1D-myo-inositol 2-amino-2-deoxy-alpha-D-glucopyranoside + L-cysteine + ATP = 1D-myo-inositol 2-(L-cysteinylamino)-2-deoxy-alpha-D-glucopyranoside + AMP + diphosphate + H(+). In terms of biological role, catalyzes the ATP-dependent condensation of GlcN-Ins and L-cysteine to form L-Cys-GlcN-Ins. The chain is L-cysteine:1D-myo-inositol 2-amino-2-deoxy-alpha-D-glucopyranoside ligase from Mycobacterium marinum (strain ATCC BAA-535 / M).